Here is a 1239-residue protein sequence, read N- to C-terminus: WD repeat-containing protein 11 (1239 aa).

WD repeat units lie at residues 63–112 (RHKA…AHCE), 115–158 (EHSK…KLWK), 358–398 (TKTV…SKSS), 476–515 (RMCP…LHKE), 571–610 (NDEP…LLRE), 713–750 (GSMG…SRGV), 752–792 (THRG…MVSS), 798–836 (NVNY…ASYR), and 898–944 (SLSN…IQAF). A disordered region spans residues 1213-1239 (EDLSQTEGTGTESSPADDTDNSLVNIE). Residues 1215–1226 (LSQTEGTGTESS) show a composition bias toward polar residues.

Component of the complex WDR11.

Its subcellular location is the cytoplasm. It localises to the cytoskeleton. The protein resides in the cilium basal body. The protein localises to the nucleus. It is found in the cilium axoneme. Its subcellular location is the cytoplasmic vesicle. It localises to the golgi apparatus. The protein resides in the trans-Golgi network. Functionally, involved in the Hedgehog (Hh) signaling pathway, is essential for normal ciliogenesis. Regulates the proteolytic processing of gli3 and cooperates with the transcription factor emx1 in the induction of downstream Hh pathway gene expression and gonadotropin-releasing hormone production. WDR11 complex facilitates the tethering of Adaptor protein-1 complex (AP-1)-derived vesicles. This is WD repeat-containing protein 11 (wdr11) from Danio rerio (Zebrafish).